The primary structure comprises 900 residues: Chaperone protein ClpB 2 (900 aa).

One can recognise a Clp R domain in the interval 15 to 154 (PDRFSDPAWE…ESLLRQPSVS (140 aa)). 2 repeat regions span residues 18 to 81 (FSDP…LADQ) and 91 to 154 (IGED…PSVS). The disordered stretch occupies residues 151-183 (PSVSPAPAPPPVPTAASAPAPTPRSAPAPRVMA). The segment covering 154 to 163 (SPAPAPPPVP) has biased composition (pro residues). The NBD1 stretch occupies residues 191-376 (ELEREPSALE…RRFQQVLIRE (186 aa)). 244–251 (GEPGVGKT) serves as a coordination point for ATP. The segment at 377-581 (PDLELSLEIL…IADLVARWTG (205 aa)) is linker. Residues 427–557 (IDLIDEAAAQ…LEASQAEAQS (131 aa)) are a coiled coil. An NBD2 region spans residues 591-803 (ERRKLLALES…RIDEVIRFRP (213 aa)). 641–648 (GPTGVGKT) provides a ligand contact to ATP. The interval 804 to 900 (LKVKDLVRIV…GASLEFEPLE (97 aa)) is C-terminal.

It belongs to the ClpA/ClpB family. In terms of assembly, homohexamer. The oligomerization is ATP-dependent.

The protein localises to the cytoplasm. Functionally, part of a stress-induced multi-chaperone system, it is involved in the recovery of the cell from heat-induced damage, in cooperation with DnaK, DnaJ and GrpE. Acts before DnaK, in the processing of protein aggregates. Protein binding stimulates the ATPase activity; ATP hydrolysis unfolds the denatured protein aggregates, which probably helps expose new hydrophobic binding sites on the surface of ClpB-bound aggregates, contributing to the solubilization and refolding of denatured protein aggregates by DnaK. The sequence is that of Chaperone protein ClpB 2 (clpB2) from Parasynechococcus marenigrum (strain WH8102).